The primary structure comprises 323 residues: Acetyl-coenzyme A carboxylase carboxyl transferase subunit alpha (323 aa).

The region spanning 39 to 293 is the CoA carboxyltransferase C-terminal domain; that stretch reads RLSKKSQQLT…RRALGDSLRQ (255 aa).

This sequence belongs to the AccA family. In terms of assembly, acetyl-CoA carboxylase is a heterohexamer composed of biotin carboxyl carrier protein (AccB), biotin carboxylase (AccC) and two subunits each of ACCase subunit alpha (AccA) and ACCase subunit beta (AccD).

It is found in the cytoplasm. The enzyme catalyses N(6)-carboxybiotinyl-L-lysyl-[protein] + acetyl-CoA = N(6)-biotinyl-L-lysyl-[protein] + malonyl-CoA. It functions in the pathway lipid metabolism; malonyl-CoA biosynthesis; malonyl-CoA from acetyl-CoA: step 1/1. Its function is as follows. Component of the acetyl coenzyme A carboxylase (ACC) complex. First, biotin carboxylase catalyzes the carboxylation of biotin on its carrier protein (BCCP) and then the CO(2) group is transferred by the carboxyltransferase to acetyl-CoA to form malonyl-CoA. The sequence is that of Acetyl-coenzyme A carboxylase carboxyl transferase subunit alpha from Burkholderia pseudomallei (strain 1106a).